Consider the following 117-residue polypeptide: Cell division protein FtsB (117 aa).

Residues 1-6 are Cytoplasmic-facing; sequence MRDWRW. The chain crosses the membrane as a helical span at residues 7–24; the sequence is MLLVLALLLGWLQYRFWF. At 25–117 the chain is on the periplasmic side; the sequence is GPGNSGEVMM…QVGDHPADVP (93 aa). A coiled-coil region spans residues 29 to 69; that stretch reads SGEVMMLEAQVANQERDNEGLQQRNDALAAEVKDLKEGQSA.

The protein belongs to the FtsB family. As to quaternary structure, part of a complex composed of FtsB, FtsL and FtsQ.

Its subcellular location is the cell inner membrane. In terms of biological role, essential cell division protein. May link together the upstream cell division proteins, which are predominantly cytoplasmic, with the downstream cell division proteins, which are predominantly periplasmic. This is Cell division protein FtsB from Stenotrophomonas maltophilia (strain K279a).